The chain runs to 266 residues: ATP synthase subunit a (266 aa).

6 helical membrane passes run 38-58, 99-119, 126-146, 162-182, 191-211, and 224-244; these read KQMLLVILSVVIIATFFLLAA, LLFSLFFFILVNNIYGAIPLI, HVGGAYVLAAIVYLTWIAIGV, GVPVYILPIVIPIEIISNFLV, LFATMLAGHLIVMIAGSGIEY, and SVLVLVGAIAMYMLEALIMAL.

The protein belongs to the ATPase A chain family. As to quaternary structure, F-type ATPases have 2 components, CF(1) - the catalytic core - and CF(0) - the membrane proton channel. CF(1) has five subunits: alpha(3), beta(3), gamma(1), delta(1), epsilon(1). CF(0) has three main subunits: a(1), b(2) and c(9-12). The alpha and beta chains form an alternating ring which encloses part of the gamma chain. CF(1) is attached to CF(0) by a central stalk formed by the gamma and epsilon chains, while a peripheral stalk is formed by the delta and b chains.

The protein resides in the cell membrane. Key component of the proton channel; it plays a direct role in the translocation of protons across the membrane. The sequence is that of ATP synthase subunit a from Arthrobacter sp. (strain FB24).